The following is a 129-amino-acid chain: uncharacterized protein (129 aa).

Residues 44-63 (PYRAADRSNDQDNDRSGGNV) form a disordered region. A compositionally biased stretch (basic and acidic residues) spans 46–58 (RAADRSNDQDNDR). The next 2 helical transmembrane spans lie at 78-98 (IISLFVLPVLLGAAGIIVGYI) and 109-129 (AWAMGIGVVSLVLGIFIIPFF).

The protein localises to the cell membrane. This is an uncharacterized protein from Bacillus subtilis (strain 168).